Here is a 766-residue protein sequence, read N- to C-terminus: Lanosterol synthase ERG7 (766 aa).

The disordered stretch occupies residues 1 to 47; that stretch reads MVANSTGRDASALKSRKRAADSESEPLLKQGQPFPKQPRIGSELDKT. The stretch at 148–190 is one PFTB 1 repeat; sequence ATAIYNYISARAHPEDGGWGLHIEGESSVFGTLMNYVALRLVG. Asp-482 functions as the Proton donor in the catalytic mechanism. 2 PFTB repeats span residues 586–626 and 635–676; these read IRTA…KHIG and SRRG…VVQT.

It belongs to the terpene cyclase/mutase family.

The protein localises to the lipid droplet. It localises to the endoplasmic reticulum membrane. It carries out the reaction (S)-2,3-epoxysqualene = lanosterol. It functions in the pathway terpene metabolism; lanosterol biosynthesis; lanosterol from farnesyl diphosphate: step 3/3. Its pathway is steroid metabolism; ergosterol biosynthesis. Functionally, lanosterol synthase; part of the third module of ergosterol biosynthesis pathway that includes the late steps of the pathway. ERG7 catalyzes the cyclization of (S)-2,3 oxidosqualene to lanosterol, a reaction that forms the sterol core. The third module or late pathway involves the ergosterol synthesis itself through consecutive reactions that mainly occur in the endoplasmic reticulum (ER) membrane. Firstly, the squalene synthase ERG9 catalyzes the condensation of 2 farnesyl pyrophosphate moieties to form squalene, which is the precursor of all steroids. Squalene synthase is crucial for balancing the incorporation of farnesyl diphosphate (FPP) into sterol and nonsterol isoprene synthesis. Secondly, squalene is converted into lanosterol by the consecutive action of the squalene epoxidase ERG1 and the lanosterol synthase ERG7. Then, the delta(24)-sterol C-methyltransferase ERG6 methylates lanosterol at C-24 to produce eburicol. Eburicol is the substrate of the sterol 14-alpha demethylase encoded by CYP51A, CYP51B and CYP51C, to yield 4,4,24-trimethyl ergosta-8,14,24(28)-trienol. CYP51B encodes the enzyme primarily responsible for sterol 14-alpha-demethylation, and plays an essential role in ascospore formation. CYP51A encodes an additional sterol 14-alpha-demethylase, induced on ergosterol depletion and responsible for the intrinsic variation in azole sensitivity. The third CYP51 isoform, CYP51C, does not encode a sterol 14-alpha-demethylase, but is required for full virulence on host wheat ears. The C-14 reductase ERG24 then reduces the C14=C15 double bond which leads to 4,4-dimethylfecosterol. A sequence of further demethylations at C-4, involving the C-4 demethylation complex containing the C-4 methylsterol oxidases ERG25, the sterol-4-alpha-carboxylate 3-dehydrogenase ERG26 and the 3-keto-steroid reductase ERG27, leads to the production of fecosterol via 4-methylfecosterol. ERG28 has a role as a scaffold to help anchor ERG25, ERG26 and ERG27 to the endoplasmic reticulum. The C-8 sterol isomerase ERG2 then catalyzes the reaction which results in unsaturation at C-7 in the B ring of sterols and thus converts fecosterol to episterol. The sterol-C5-desaturases ERG3A and ERG3BB then catalyze the introduction of a C-5 double bond in the B ring to produce 5-dehydroepisterol. The C-22 sterol desaturases ERG5A and ERG5B further convert 5-dehydroepisterol into ergosta-5,7,22,24(28)-tetraen-3beta-ol by forming the C-22(23) double bond in the sterol side chain. Finally, ergosta-5,7,22,24(28)-tetraen-3beta-ol is substrate of the C-24(28) sterol reductase ERG4 to produce ergosterol. The polypeptide is Lanosterol synthase ERG7 (Gibberella zeae (strain ATCC MYA-4620 / CBS 123657 / FGSC 9075 / NRRL 31084 / PH-1) (Wheat head blight fungus)).